The primary structure comprises 629 residues: DNA mismatch repair protein MutL (629 aa).

The protein belongs to the DNA mismatch repair MutL/HexB family.

In terms of biological role, this protein is involved in the repair of mismatches in DNA. It is required for dam-dependent methyl-directed DNA mismatch repair. May act as a 'molecular matchmaker', a protein that promotes the formation of a stable complex between two or more DNA-binding proteins in an ATP-dependent manner without itself being part of a final effector complex. This Haemophilus influenzae (strain PittGG) protein is DNA mismatch repair protein MutL.